The sequence spans 189 residues: dCTP deaminase, dUMP-forming (189 aa).

DCTP is bound by residues 101-106 (KSSLGR), D119, 127-129 (TLE), Q148, Y162, and Q174. E129 (proton donor/acceptor) is an active-site residue. A disordered region spans residues 166-189 (AVGSKYQGQRGPTPSRSHLNFIKS). Residues 171-189 (YQGQRGPTPSRSHLNFIKS) show a composition bias toward polar residues.

It belongs to the dCTP deaminase family. As to quaternary structure, homotrimer.

It carries out the reaction dCTP + 2 H2O = dUMP + NH4(+) + diphosphate. It participates in pyrimidine metabolism; dUMP biosynthesis; dUMP from dCTP: step 1/1. In terms of biological role, bifunctional enzyme that catalyzes both the deamination of dCTP to dUTP and the hydrolysis of dUTP to dUMP without releasing the toxic dUTP intermediate. This chain is dCTP deaminase, dUMP-forming, found in Mycolicibacterium smegmatis (strain ATCC 700084 / mc(2)155) (Mycobacterium smegmatis).